The chain runs to 397 residues: Acetate kinase (397 aa).

Asparagine 8 contacts Mg(2+). Lysine 15 contributes to the ATP binding site. Arginine 89 provides a ligand contact to substrate. Aspartate 146 (proton donor/acceptor) is an active-site residue. Residues 206-210 (HLGNG), 281-283 (DLR), and 329-333 (GIGEN) each bind ATP. A Mg(2+)-binding site is contributed by glutamate 382.

This sequence belongs to the acetokinase family. In terms of assembly, homodimer. Requires Mg(2+) as cofactor. It depends on Mn(2+) as a cofactor.

The protein localises to the cytoplasm. It catalyses the reaction acetate + ATP = acetyl phosphate + ADP. It functions in the pathway metabolic intermediate biosynthesis; acetyl-CoA biosynthesis; acetyl-CoA from acetate: step 1/2. In terms of biological role, catalyzes the formation of acetyl phosphate from acetate and ATP. Can also catalyze the reverse reaction. The sequence is that of Acetate kinase from Anoxybacillus flavithermus (strain DSM 21510 / WK1).